Reading from the N-terminus, the 330-residue chain is MEAVAKFDFTASGEDELSFHTGDVLKILSNQEEWFKAELGSQEGYVPKNFIDIQFPKWFHEGLSRHQAENLLMGKEVGFFIIRASQSSPGDFSISVRHEDDVQHFKVMRDNKGNYFLWTEKFPSLNKLVDYYRTNSISRQKQIFLRDRTREDQGHRGNSLDRRSQGGPHLSGAVGEEIRPSMNRKLSDHPPTLPLQQHQHQPQPPQYAPAPQQLQQPPQQRYLQHHHFHQERRGGSLDINDGHCGTGLGSEMNAALMHRRHTDPVQLQAAGRVRWARALYDFEALEDDELGFHSGEVVEVLDSSNPSWWTGRLHNKLGLFPANYVAPMTR.

The region spanning 1 to 56 (MEAVAKFDFTASGEDELSFHTGDVLKILSNQEEWFKAELGSQEGYVPKNFIDIQFP) is the SH3 1 domain. Y45 is modified (phosphotyrosine). The region spanning 58 to 149 (WFHEGLSRHQ…QKQIFLRDRT (92 aa)) is the SH2 domain. N6-acetyllysine is present on K106. A disordered region spans residues 143 to 244 (IFLRDRTRED…GSLDINDGHC (102 aa)). Positions 144–164 (FLRDRTREDQGHRGNSLDRRS) are enriched in basic and acidic residues. At S187 the chain carries Phosphoserine. Positions 209–222 (PAPQQLQQPPQQRY) are enriched in low complexity. A Phosphoserine modification is found at S236. A Phosphothreonine modification is found at T262. Residues 271-330 (GRVRWARALYDFEALEDDELGFHSGEVVEVLDSSNPSWWTGRLHNKLGLFPANYVAPMTR) enclose the SH3 2 domain.

It belongs to the GRB2/sem-5/DRK family. In terms of assembly, interacts with phosphorylated LIME1 upon TCR activation. Interacts with phosphorylated LAT and LAX1 upon TCR activation. Interacts with SHB. Interacts with PTPN23.

It is found in the nucleus. It localises to the cytoplasm. The protein resides in the endosome. Functionally, interacts with SLP-76 to regulate NF-AT activation. Binds to tyrosine-phosphorylated shc. The sequence is that of GRB2-related adapter protein 2 (GRAP2) from Homo sapiens (Human).